The sequence spans 439 residues: Mitochondrial distribution and morphology protein 12 (439 aa).

In terms of domain architecture, SMP-LTD spans 1 to 439 (MSIDINWDTI…VYPSFWTFLV (439 aa)). Disordered regions lie at residues 65-165 (PLPD…PGAL) and 229-284 (LTLT…HEKS). The segment covering 69–90 (FYEDDEDYPDEEGDEAENEAED) has biased composition (acidic residues). The segment covering 109–121 (PSRDSQSRERGRG) has biased composition (basic and acidic residues). The span at 229–243 (LTLTPQSHPDPTSRP) shows a compositional bias: polar residues.

This sequence belongs to the MDM12 family. Component of the ER-mitochondria encounter structure (ERMES) or MDM complex, composed of MMM1, MDM10, mdm12 and MDM34. An MMM1 homodimer associates with one molecule of mdm12 on each side in a pairwise head-to-tail manner, and the SMP-LTD domains of MMM1 and mdm12 generate a continuous hydrophobic tunnel for phospholipid trafficking.

It localises to the mitochondrion outer membrane. The protein resides in the endoplasmic reticulum membrane. In terms of biological role, component of the ERMES/MDM complex, which serves as a molecular tether to connect the endoplasmic reticulum (ER) and mitochondria. Components of this complex are involved in the control of mitochondrial shape and protein biogenesis, and function in nonvesicular lipid trafficking between the ER and mitochondria. mdm12 is required for the interaction of the ER-resident membrane protein MMM1 and the outer mitochondrial membrane-resident beta-barrel protein MDM10. The mdm12-MMM1 subcomplex functions in the major beta-barrel assembly pathway that is responsible for biogenesis of all mitochondrial outer membrane beta-barrel proteins, and acts in a late step after the SAM complex. The MDM10-mdm12-MMM1 subcomplex further acts in the TOM40-specific pathway after the action of the mdm12-MMM1 complex. Essential for establishing and maintaining the structure of mitochondria and maintenance of mtDNA nucleoids. The protein is Mitochondrial distribution and morphology protein 12 of Pyrenophora tritici-repentis (strain Pt-1C-BFP) (Wheat tan spot fungus).